A 1551-amino-acid polypeptide reads, in one-letter code: Pentafunctional AROM polypeptide 1 (1551 aa).

A 3-dehydroquinate synthase region spans residues 1 to 379 (MSIEKVSILG…YESKAHQIFK (379 aa)). NAD(+)-binding positions include 42-44 (DTN), 80-83 (ENHK), 111-113 (GGV), and aspartate 116. Arginine 127 contributes to the 7-phospho-2-dehydro-3-deoxy-D-arabino-heptonate binding site. 136-137 (TT) contributes to the NAD(+) binding site. The 7-phospho-2-dehydro-3-deoxy-D-arabino-heptonate site is built by aspartate 143 and lysine 149. Residue lysine 158 participates in NAD(+) binding. Residue asparagine 159 participates in 7-phospho-2-dehydro-3-deoxy-D-arabino-heptonate binding. NAD(+) is bound by residues 176 to 179 (FLQT) and asparagine 187. Glutamate 191 serves as a coordination point for Zn(2+). 7-phospho-2-dehydro-3-deoxy-D-arabino-heptonate-binding positions include 191 to 194 (EVVK) and lysine 243. Glutamate 253 serves as the catalytic Proton acceptor; for 3-dehydroquinate synthase activity. 7-phospho-2-dehydro-3-deoxy-D-arabino-heptonate contacts are provided by residues 257–261 (RNLLN) and histidine 264. Residue histidine 264 coordinates Zn(2+). The active-site Proton acceptor; for 3-dehydroquinate synthase activity is the histidine 268. Positions 280 and 351 each coordinate 7-phospho-2-dehydro-3-deoxy-D-arabino-heptonate. Histidine 280 is a Zn(2+) binding site. Residues 392-835 (VHPFANRHPE…WDVLHSKFNA (444 aa)) are EPSP synthase. Positions 854–1044 (DRSIVIIGMR…LPATRSTFVT (191 aa)) are shikimate kinase. 861–868 (GMRAAGKT) lines the ATP pocket. The segment at 1045–1258 (LTYPDLRKVP…IGVGQLSLKE (214 aa)) is 3-dehydroquinase. The active-site Proton acceptor; for 3-dehydroquinate dehydratase activity is histidine 1162. The Schiff-base intermediate with substrate; for 3-dehydroquinate dehydratase activity role is filled by lysine 1191. The interval 1271–1551 (EKEFWVVGSP…KVIHSAVLNE (281 aa)) is shikimate dehydrogenase.

In the N-terminal section; belongs to the sugar phosphate cyclases superfamily. Dehydroquinate synthase family. This sequence in the 2nd section; belongs to the EPSP synthase family. It in the 3rd section; belongs to the shikimate kinase family. The protein in the 4th section; belongs to the type-I 3-dehydroquinase family. In the C-terminal section; belongs to the shikimate dehydrogenase family. In terms of assembly, homodimer. It depends on Zn(2+) as a cofactor.

It is found in the cytoplasm. It catalyses the reaction 7-phospho-2-dehydro-3-deoxy-D-arabino-heptonate = 3-dehydroquinate + phosphate. The catalysed reaction is 3-dehydroquinate = 3-dehydroshikimate + H2O. The enzyme catalyses shikimate + NADP(+) = 3-dehydroshikimate + NADPH + H(+). It carries out the reaction shikimate + ATP = 3-phosphoshikimate + ADP + H(+). It catalyses the reaction 3-phosphoshikimate + phosphoenolpyruvate = 5-O-(1-carboxyvinyl)-3-phosphoshikimate + phosphate. Its pathway is metabolic intermediate biosynthesis; chorismate biosynthesis; chorismate from D-erythrose 4-phosphate and phosphoenolpyruvate: step 2/7. It functions in the pathway metabolic intermediate biosynthesis; chorismate biosynthesis; chorismate from D-erythrose 4-phosphate and phosphoenolpyruvate: step 3/7. It participates in metabolic intermediate biosynthesis; chorismate biosynthesis; chorismate from D-erythrose 4-phosphate and phosphoenolpyruvate: step 4/7. The protein operates within metabolic intermediate biosynthesis; chorismate biosynthesis; chorismate from D-erythrose 4-phosphate and phosphoenolpyruvate: step 5/7. Its pathway is metabolic intermediate biosynthesis; chorismate biosynthesis; chorismate from D-erythrose 4-phosphate and phosphoenolpyruvate: step 6/7. The AROM polypeptide catalyzes 5 consecutive enzymatic reactions in prechorismate polyaromatic amino acid biosynthesis. The protein is Pentafunctional AROM polypeptide 1 of Lodderomyces elongisporus (strain ATCC 11503 / CBS 2605 / JCM 1781 / NBRC 1676 / NRRL YB-4239) (Yeast).